The following is a 47-amino-acid chain: Variabilin (47 aa).

The short motif at 32–34 (RGD) is the Cell attachment site element.

Contains 2 disulfide bonds. Expressed in salivary glands.

The protein resides in the secreted. Potently inhibits platelet aggregation induced by ADP (IC(50)=157 nM, complete inhibition at 514 nM). Also inhibits platelet aggregation induced by collagen and by the thrombin receptor peptide SFLLRNP. Is a potent antagonist of the fibrinogen receptor glycoprotein IIb-IIIa (ITGA2B/ITGB3) and the vitronectin receptor alpha-v/beta-3 (ITGAV/ITGB3). The sequence is that of Variabilin from Dermacentor variabilis (American dog tick).